The following is a 358-amino-acid chain: Phospho-N-acetylmuramoyl-pentapeptide-transferase (358 aa).

The next 10 membrane-spanning stretches (helical) occupy residues 19–39 (YLTL…VLIG), 71–91 (TMGG…WADL), 95–115 (YVWV…IDDY), 126–146 (LIAR…ALYL), 166–186 (VMPQ…VGTS), 194–214 (GLDG…AIFA), 237–257 (LVIV…FNTY), 261–281 (VFMG…IAVL), 286–306 (IVLV…ILQV), and 336–356 (VIVR…ATLK).

This sequence belongs to the glycosyltransferase 4 family. MraY subfamily. Requires Mg(2+) as cofactor.

Its subcellular location is the cell inner membrane. It catalyses the reaction UDP-N-acetyl-alpha-D-muramoyl-L-alanyl-gamma-D-glutamyl-meso-2,6-diaminopimeloyl-D-alanyl-D-alanine + di-trans,octa-cis-undecaprenyl phosphate = di-trans,octa-cis-undecaprenyl diphospho-N-acetyl-alpha-D-muramoyl-L-alanyl-D-glutamyl-meso-2,6-diaminopimeloyl-D-alanyl-D-alanine + UMP. It participates in cell wall biogenesis; peptidoglycan biosynthesis. Its function is as follows. Catalyzes the initial step of the lipid cycle reactions in the biosynthesis of the cell wall peptidoglycan: transfers peptidoglycan precursor phospho-MurNAc-pentapeptide from UDP-MurNAc-pentapeptide onto the lipid carrier undecaprenyl phosphate, yielding undecaprenyl-pyrophosphoryl-MurNAc-pentapeptide, known as lipid I. The protein is Phospho-N-acetylmuramoyl-pentapeptide-transferase of Pseudoalteromonas atlantica (strain T6c / ATCC BAA-1087).